We begin with the raw amino-acid sequence, 102 residues long: MARERIRVKLCGFDVELVDQSSRAIVHAVQKAGAEVLGPIPLPTRMHKFTVLRSPHVNKKSREQFEMRTHKRLIDIIEPSQEVMNALMGLELSAGVDVRIKQ.

Belongs to the universal ribosomal protein uS10 family. As to quaternary structure, part of the 30S ribosomal subunit.

In terms of biological role, involved in the binding of tRNA to the ribosomes. In Treponema pallidum (strain Nichols), this protein is Small ribosomal subunit protein uS10.